The chain runs to 361 residues: Geranylgeranyl pyrophosphate synthase 3 (361 aa).

Residues 44-63 (DSNGSKELAPNGAQSRVQKP) are disordered. 3 residues coordinate isopentenyl diphosphate: Lys81, Arg84, and His113. The Mg(2+) site is built by Asp120 and Asp124. Dimethylallyl diphosphate is bound at residue Arg129. Arg130 contacts isopentenyl diphosphate. Dimethylallyl diphosphate is bound by residues Lys207, Thr208, and Gln244. Asp247 is a binding site for Mg(2+). Dimethylallyl diphosphate contacts are provided by Asn251, Lys261, and Lys271.

Belongs to the FPP/GGPP synthase family. The cofactor is Mg(2+).

It catalyses the reaction isopentenyl diphosphate + dimethylallyl diphosphate = (2E)-geranyl diphosphate + diphosphate. The catalysed reaction is isopentenyl diphosphate + (2E)-geranyl diphosphate = (2E,6E)-farnesyl diphosphate + diphosphate. It carries out the reaction isopentenyl diphosphate + (2E,6E)-farnesyl diphosphate = (2E,6E,10E)-geranylgeranyl diphosphate + diphosphate. Its function is as follows. Geranylgeranyl pyrophosphate synthase; part of the gene cluster 25 that mediates the biosynthesis of an isoprenoid secondary metabolite. This chain is Geranylgeranyl pyrophosphate synthase 3 (GGS3), found in Zymoseptoria tritici (strain CBS 115943 / IPO323) (Speckled leaf blotch fungus).